Reading from the N-terminus, the 510-residue chain is Zinc finger and SCAN domain-containing protein 18 (510 aa).

A disordered region spans residues 1-40 (MLPLEKAFASPRSSPAPPDLPTPGSAAGVQQEEPETIPER). The 83-residue stretch at 49 to 131 (RLRFREFVYQ…SLVEGLADVL (83 aa)) folds into the SCAN box domain. 4 disordered regions span residues 172 to 191 (ALGA…SPDP), 201 to 231 (EAKT…EWGH), 263 to 413 (TEEL…GKPY), and 461 to 510 (KTHE…EAQR). Composition is skewed to basic and acidic residues over residues 214–231 (QKLK…EWGH) and 263–273 (TEELRLVERDP). Positions 288–299 (AGCACEEAAPAG) are enriched in low complexity. Residues 344 to 356 (DSATGSQRQSVIQ) show a composition bias toward polar residues. 2 C2H2-type zinc fingers span residues 413–435 (YACG…HSSH) and 441–463 (YACQ…QKTH). Low complexity predominate over residues 491–501 (GGPPESVEGEA).

This sequence belongs to the krueppel C2H2-type zinc-finger protein family.

Its subcellular location is the nucleus. May be involved in transcriptional regulation. This chain is Zinc finger and SCAN domain-containing protein 18 (ZSCAN18), found in Homo sapiens (Human).